A 243-amino-acid chain; its full sequence is MDIEICIDNIESALIAQNSGADRLEVCGCLALGGVTPPYSLIKTVLDVCNIPCYVMIRPRSGDFLFNAHEIKMMEQDIHIAKQLGAQGVVIGALTENGEIDLSICHRLISAAEGLGVTFHRAFDLCSDPYHGLEQLIELGCERVLTSGQQRTAFEGRYVLKTLVQQAKGRIKIMAGAGVNPNNALELVKISKVDELHLSAKTFRQSSMKGNSSVTMGNKAEDDYKIWTTDRNQIIAIKKLFQE.

It belongs to the CutC family.

It is found in the cytoplasm. In Histophilus somni (strain 2336) (Haemophilus somnus), this protein is PF03932 family protein CutC.